The sequence spans 122 residues: Large ribosomal subunit protein uL14 (122 aa).

The protein belongs to the universal ribosomal protein uL14 family. In terms of assembly, part of the 50S ribosomal subunit. Forms a cluster with proteins L3 and L19. In the 70S ribosome, L14 and L19 interact and together make contacts with the 16S rRNA in bridges B5 and B8.

Its function is as follows. Binds to 23S rRNA. Forms part of two intersubunit bridges in the 70S ribosome. The protein is Large ribosomal subunit protein uL14 of Shewanella frigidimarina (strain NCIMB 400).